Here is a 94-residue protein sequence, read N- to C-terminus: Large ribosomal subunit protein bL28 (94 aa).

The protein belongs to the bacterial ribosomal protein bL28 family.

The protein is Large ribosomal subunit protein bL28 of Hyphomonas neptunium (strain ATCC 15444).